A 276-amino-acid chain; its full sequence is 4-hydroxy-3-methylbut-2-enyl diphosphate reductase (276 aa).

Residue cysteine 12 participates in [4Fe-4S] cluster binding. Positions 36 and 71 each coordinate (2E)-4-hydroxy-3-methylbut-2-enyl diphosphate. Histidine 36 and histidine 71 together coordinate dimethylallyl diphosphate. Isopentenyl diphosphate is bound by residues histidine 36 and histidine 71. [4Fe-4S] cluster is bound at residue cysteine 93. A (2E)-4-hydroxy-3-methylbut-2-enyl diphosphate-binding site is contributed by histidine 121. Histidine 121 is a binding site for dimethylallyl diphosphate. Isopentenyl diphosphate is bound at residue histidine 121. The Proton donor role is filled by glutamate 123. Threonine 160 is a (2E)-4-hydroxy-3-methylbut-2-enyl diphosphate binding site. Cysteine 188 contacts [4Fe-4S] cluster. Residues serine 216, serine 217, asparagine 218, and serine 259 each coordinate (2E)-4-hydroxy-3-methylbut-2-enyl diphosphate. Serine 216, serine 217, asparagine 218, and serine 259 together coordinate dimethylallyl diphosphate. 4 residues coordinate isopentenyl diphosphate: serine 216, serine 217, asparagine 218, and serine 259.

The protein belongs to the IspH family. The cofactor is [4Fe-4S] cluster.

The catalysed reaction is isopentenyl diphosphate + 2 oxidized [2Fe-2S]-[ferredoxin] + H2O = (2E)-4-hydroxy-3-methylbut-2-enyl diphosphate + 2 reduced [2Fe-2S]-[ferredoxin] + 2 H(+). The enzyme catalyses dimethylallyl diphosphate + 2 oxidized [2Fe-2S]-[ferredoxin] + H2O = (2E)-4-hydroxy-3-methylbut-2-enyl diphosphate + 2 reduced [2Fe-2S]-[ferredoxin] + 2 H(+). It participates in isoprenoid biosynthesis; dimethylallyl diphosphate biosynthesis; dimethylallyl diphosphate from (2E)-4-hydroxy-3-methylbutenyl diphosphate: step 1/1. It functions in the pathway isoprenoid biosynthesis; isopentenyl diphosphate biosynthesis via DXP pathway; isopentenyl diphosphate from 1-deoxy-D-xylulose 5-phosphate: step 6/6. In terms of biological role, catalyzes the conversion of 1-hydroxy-2-methyl-2-(E)-butenyl 4-diphosphate (HMBPP) into a mixture of isopentenyl diphosphate (IPP) and dimethylallyl diphosphate (DMAPP). Acts in the terminal step of the DOXP/MEP pathway for isoprenoid precursor biosynthesis. In Nautilia profundicola (strain ATCC BAA-1463 / DSM 18972 / AmH), this protein is 4-hydroxy-3-methylbut-2-enyl diphosphate reductase.